The primary structure comprises 115 residues: MREMAEDIEEIRRRKLMELQRKYLEQQKAQEEAERQQALIEAQIQAILRKILTPEARERLARVKLVRPELARQVELILVQLYQAGQITERIDDAKLKRILAQIEAKTRREFRIKW.

This sequence belongs to the PDCD5 family.

The polypeptide is DNA-binding protein PH1060 (Pyrococcus horikoshii (strain ATCC 700860 / DSM 12428 / JCM 9974 / NBRC 100139 / OT-3)).